A 520-amino-acid polypeptide reads, in one-letter code: 2-isopropylmalate synthase (520 aa).

The 263-residue stretch at 12-274 folds into the Pyruvate carboxyltransferase domain; sequence IRIFDTTLRD…DTAINTPRIV (263 aa). Residues Asp-21, His-209, His-211, and Asn-245 each coordinate Mn(2+). The tract at residues 396 to 520 is regulatory domain; it reads RLASMTISDV…VVAGKTAAVA (125 aa).

Belongs to the alpha-IPM synthase/homocitrate synthase family. LeuA type 1 subfamily. In terms of assembly, homodimer. Mn(2+) is required as a cofactor.

The protein resides in the cytoplasm. The catalysed reaction is 3-methyl-2-oxobutanoate + acetyl-CoA + H2O = (2S)-2-isopropylmalate + CoA + H(+). Its pathway is amino-acid biosynthesis; L-leucine biosynthesis; L-leucine from 3-methyl-2-oxobutanoate: step 1/4. Catalyzes the condensation of the acetyl group of acetyl-CoA with 3-methyl-2-oxobutanoate (2-ketoisovalerate) to form 3-carboxy-3-hydroxy-4-methylpentanoate (2-isopropylmalate). In Xanthomonas campestris pv. campestris (strain B100), this protein is 2-isopropylmalate synthase.